A 258-amino-acid polypeptide reads, in one-letter code: C1q-related factor (258 aa).

The first 16 residues, 1–16, serve as a signal peptide directing secretion; the sequence is MLLVLVVLIPVLVSSG. Residues 39-120 are disordered; that stretch reads GPGAGARSDG…PGSGGSGAIS (82 aa). Low complexity predominate over residues 67–77; sequence GPQGKPGRTGK. The Collagen-like domain occupies 67 to 115; the sequence is GPQGKPGRTGKPGPPGPPGDRGPPGPVGPPGEKGEPGKPGPPGLPGSGG. The segment covering 78-95 has biased composition (pro residues); the sequence is PGPPGPPGDRGPPGPVGP. In terms of domain architecture, C1q spans 125 to 258; that stretch reads TTVPRVAFYA…TFSGFIIYSD (134 aa).

In terms of assembly, interacts with ADGRB3. Forms heterooligomers with C1QL4, when proteins are coexpressed; this interaction does not occur after secretion. In terms of tissue distribution, expressed in brainstem. More abundant in areas of the nervous system involved in motor function, such as the Purkinje cells of the cerebellum, the accessory olivary nucleus, the pons and the red nucleus.

The protein localises to the secreted. Its function is as follows. May regulate the number of excitatory synapses that are formed on hippocampus neurons. Has no effect on inhibitory synapses. This Mus musculus (Mouse) protein is C1q-related factor (C1ql1).